We begin with the raw amino-acid sequence, 356 residues long: Peptide methionine sulfoxide reductase MsrA/MsrB (356 aa).

Positions 46-199 (HEIYLAGGCF…PNGYCHIDLE (154 aa)) are peptide methionine sulfoxide reductase A. Cys54 is an active-site residue. Residues 216-339 (DAELKAKLTP…NSAAVKFIPL (124 aa)) form the MsrB domain. Cys328 (nucleophile) is an active-site residue.

This sequence in the N-terminal section; belongs to the MsrA Met sulfoxide reductase family. In the C-terminal section; belongs to the MsrB Met sulfoxide reductase family.

The catalysed reaction is L-methionyl-[protein] + [thioredoxin]-disulfide + H2O = L-methionyl-(S)-S-oxide-[protein] + [thioredoxin]-dithiol. The enzyme catalyses [thioredoxin]-disulfide + L-methionine + H2O = L-methionine (S)-S-oxide + [thioredoxin]-dithiol. It catalyses the reaction L-methionyl-[protein] + [thioredoxin]-disulfide + H2O = L-methionyl-(R)-S-oxide-[protein] + [thioredoxin]-dithiol. Its function is as follows. Has an important function as a repair enzyme for proteins that have been inactivated by oxidation. Catalyzes the reversible oxidation-reduction of methionine sulfoxide in proteins to methionine. This chain is Peptide methionine sulfoxide reductase MsrA/MsrB (msrAB), found in Aggregatibacter actinomycetemcomitans (Actinobacillus actinomycetemcomitans).